Reading from the N-terminus, the 28-residue chain is Ribosome-inactivating protein pleuturegin (28 aa).

The protein belongs to the ribosome-inactivating protein family.

The catalysed reaction is Endohydrolysis of the N-glycosidic bond at one specific adenosine on the 28S rRNA.. Functionally, inhibits protein synthesis in animal cells. Does not possess ribonuclease activity. This Pleurotus tuber-regium (King tuber oyster mushroom) protein is Ribosome-inactivating protein pleuturegin.